The following is a 95-amino-acid chain: UPF0473 protein CD630_12860 (95 aa).

It belongs to the UPF0473 family.

The protein is UPF0473 protein CD630_12860 of Clostridioides difficile (strain 630) (Peptoclostridium difficile).